Consider the following 614-residue polypeptide: Methionine--tRNA ligase (614 aa).

The short motif at 11–21 is the 'HIGH' region element; the sequence is PYTNGPRHIGH. Zn(2+) is bound by residues Cys-143, Cys-146, Cys-156, and Cys-159. The 'KMSKS' region signature appears at 359-363; the sequence is QFSTS. Residue Thr-362 participates in ATP binding.

It belongs to the class-I aminoacyl-tRNA synthetase family. MetG type 1 subfamily. Monomer. Requires Zn(2+) as cofactor.

Its subcellular location is the cytoplasm. It catalyses the reaction tRNA(Met) + L-methionine + ATP = L-methionyl-tRNA(Met) + AMP + diphosphate. Functionally, is required not only for elongation of protein synthesis but also for the initiation of all mRNA translation through initiator tRNA(fMet) aminoacylation. This is Methionine--tRNA ligase from Beutenbergia cavernae (strain ATCC BAA-8 / DSM 12333 / CCUG 43141 / JCM 11478 / NBRC 16432 / NCIMB 13614 / HKI 0122).